The chain runs to 262 residues: 3-methyl-2-oxobutanoate hydroxymethyltransferase (262 aa).

Residues Asp42 and Asp81 each contribute to the Mg(2+) site. Residues 42-43 (DS), Asp81, and Lys110 contribute to the 3-methyl-2-oxobutanoate site. A Mg(2+)-binding site is contributed by Glu112. Glu180 acts as the Proton acceptor in catalysis.

The protein belongs to the PanB family. In terms of assembly, homodecamer; pentamer of dimers. Mg(2+) serves as cofactor.

Its subcellular location is the cytoplasm. The catalysed reaction is 3-methyl-2-oxobutanoate + (6R)-5,10-methylene-5,6,7,8-tetrahydrofolate + H2O = 2-dehydropantoate + (6S)-5,6,7,8-tetrahydrofolate. Its pathway is cofactor biosynthesis; (R)-pantothenate biosynthesis; (R)-pantoate from 3-methyl-2-oxobutanoate: step 1/2. Catalyzes the reversible reaction in which hydroxymethyl group from 5,10-methylenetetrahydrofolate is transferred onto alpha-ketoisovalerate to form ketopantoate. This Legionella pneumophila (strain Corby) protein is 3-methyl-2-oxobutanoate hydroxymethyltransferase.